Consider the following 319-residue polypeptide: tRNA uridine(34) hydroxylase (319 aa).

In terms of domain architecture, Rhodanese spans 133 to 231 (EDPDSVVIDT…YLEDVSSENS (99 aa)). Catalysis depends on Cys191, which acts as the Cysteine persulfide intermediate.

Belongs to the TrhO family.

It carries out the reaction uridine(34) in tRNA + AH2 + O2 = 5-hydroxyuridine(34) in tRNA + A + H2O. In terms of biological role, catalyzes oxygen-dependent 5-hydroxyuridine (ho5U) modification at position 34 in tRNAs. The sequence is that of tRNA uridine(34) hydroxylase from Prochlorococcus marinus (strain NATL1A).